The chain runs to 601 residues: Tubulin polyglutamylase ttll-4 (601 aa).

The segment covering 1–18 has biased composition (polar residues); that stretch reads MSSGYSSAPSVSHTSSDT. The interval 1–37 is disordered; it reads MSSGYSSAPSVSHTSSDTDLNRIDSYDDGAEETTDEQ. Residues 138–476 form the TTL domain; that stretch reads QARLTWCHNS…YVPPSFDKLS (339 aa). ATP contacts are provided by residues K254, 260–261, 282–285, and 295–297; these read RG, QHYI, and KFD. R260 is a binding site for a protein. R321 serves as a coordination point for L-glutamate. 342–343 is an ATP binding site; that stretch reads TN. 3 residues coordinate L-glutamate: Y344, S345, and K362. 3 residues coordinate Mg(2+): D422, E435, and N437. K453 lines the L-glutamate pocket.

The protein belongs to the tubulin--tyrosine ligase family. The cofactor is Mg(2+). Expressed in many sensory neurons in amphid.

The catalysed reaction is L-glutamyl-[protein] + L-glutamate + ATP = gamma-L-glutamyl-L-glutamyl-[protein] + ADP + phosphate + H(+). Its function is as follows. Monoglutamylase which modifies tubulin, adding a single glutamate on the gamma-carboxyl group of specific glutamate residues of target proteins. Involved in the side-chain initiation step of the polyglutamylation reaction but not in the elongation step. Preferentially modifies beta-tail tubulin over the alpha-tubulin. Involved in side-chain glutamylation of tubulin in sensory cilia. Together with ttll-5 and ttll-11, required for male mating. This is Tubulin polyglutamylase ttll-4 from Caenorhabditis elegans.